The following is a 590-amino-acid chain: Multidrug resistance ABC transporter ATP-binding and permease protein (590 aa).

The next 6 membrane-spanning stretches (helical) occupy residues 35 to 55 (YLFF…QLQV), 79 to 99 (IALY…LGIF), 150 to 170 (IPQA…MLQM), 176 to 196 (LAMI…MTFG), 261 to 281 (VMML…IYLI), and 292 to 312 (LGMM…ATFF). The ABC transmembrane type-1 domain occupies 38 to 317 (FIIGILAGIV…VATFFTELAK (280 aa)). The region spanning 349–584 (LSARHVDFAY…HPLYAKYVSE (236 aa)) is the ABC transporter domain. 382–389 (GPSGGGKS) lines the ATP pocket.

The protein belongs to the ABC transporter superfamily. Multidrug exporter LmrA (TC 3.A.1.117.1) family. In terms of assembly, homodimer.

Its subcellular location is the cell membrane. It catalyses the reaction ATP + H2O + xenobioticSide 1 = ADP + phosphate + xenobioticSide 2.. In terms of biological role, efflux transporter for a variety of amphiphilic cationic compounds, including antibiotics. This is Multidrug resistance ABC transporter ATP-binding and permease protein (lmrA) from Lactococcus lactis subsp. lactis (strain IL1403) (Streptococcus lactis).